Consider the following 119-residue polypeptide: Large ribosomal subunit protein bL20 (119 aa).

The protein belongs to the bacterial ribosomal protein bL20 family.

Its function is as follows. Binds directly to 23S ribosomal RNA and is necessary for the in vitro assembly process of the 50S ribosomal subunit. It is not involved in the protein synthesizing functions of that subunit. The polypeptide is Large ribosomal subunit protein bL20 (Erythrobacter litoralis (strain HTCC2594)).